A 229-amino-acid polypeptide reads, in one-letter code: ATP-dependent Clp protease proteolytic subunit (229 aa).

Catalysis depends on Ser101, which acts as the Nucleophile. His126 is an active-site residue.

The protein belongs to the peptidase S14 family. As to quaternary structure, component of the chloroplastic Clp protease core complex.

Its subcellular location is the plastid. It localises to the chloroplast stroma. It carries out the reaction Hydrolysis of proteins to small peptides in the presence of ATP and magnesium. alpha-casein is the usual test substrate. In the absence of ATP, only oligopeptides shorter than five residues are hydrolyzed (such as succinyl-Leu-Tyr-|-NHMec, and Leu-Tyr-Leu-|-Tyr-Trp, in which cleavage of the -Tyr-|-Leu- and -Tyr-|-Trp bonds also occurs).. Cleaves peptides in various proteins in a process that requires ATP hydrolysis. Has a chymotrypsin-like activity. Plays a major role in the degradation of misfolded proteins. The sequence is that of ATP-dependent Clp protease proteolytic subunit from Mesostigma viride (Green alga).